We begin with the raw amino-acid sequence, 542 residues long: Putative serine/threonine-protein kinase L205 (542 aa).

Basic and acidic residues predominate over residues 20 to 30 (FEKKSVGHNSD). The disordered stretch occupies residues 20 to 49 (FEKKSVGHNSDDEYDDTVPYNEDDETSEEE). The span at 31 to 49 (DEYDDTVPYNEDDETSEEE) shows a compositional bias: acidic residues. Residues 69-538 (YLLLKKIGSG…ADELLKHPWL (470 aa)) enclose the Protein kinase domain. Residues 75–83 (IGSGNNASV) and Lys98 contribute to the ATP site. The active-site Proton acceptor is the Asp201. The interval 278–314 (EELIPDDPDNNEKYYDSTDSEEYDYSDNSDYYDDDED) is disordered. Positions 295–314 (TDSEEYDYSDNSDYYDDDED) are enriched in acidic residues.

This sequence belongs to the protein kinase superfamily. Ser/Thr protein kinase family.

The enzyme catalyses L-seryl-[protein] + ATP = O-phospho-L-seryl-[protein] + ADP + H(+). The catalysed reaction is L-threonyl-[protein] + ATP = O-phospho-L-threonyl-[protein] + ADP + H(+). The protein is Putative serine/threonine-protein kinase L205 of Acanthamoeba polyphaga (Amoeba).